The primary structure comprises 1469 residues: WASH complex subunit 2 (1469 aa).

At Ser136 the chain carries Phosphoserine. 2 disordered regions span residues Tyr178 to Val349 and Lys367 to Gly546. The span at Ser197–Lys206 shows a compositional bias: basic and acidic residues. At Ser227 the chain carries Phosphoserine. Low complexity-rich tracts occupy residues Ser276–Pro293 and Ser306–Ser316. The short motif at Leu351 to Thr372 is the LFa 1 element. Positions Ser370–Thr385 are enriched in polar residues. Positions Glu387–Pro399 are enriched in basic and acidic residues. Residues Ser422 and Ser426 each carry the phosphoserine modification. The segment covering Phe519–Asp528 has biased composition (acidic residues). The short motif at Leu550–Phe563 is the LFa 5 element. The disordered stretch occupies residues Ile571–Ser591. A compositionally biased stretch (polar residues) spans Glu574–Val585. Ser580 carries the post-translational modification Phosphoserine. The residue at position 587 (Thr587) is a Phosphothreonine. An LFa 6 motif is present at residues Leu595–Phe605. 3 disordered regions span residues Thr607 to Phe760, Ala933 to Ser1254, and Val1316 to Lys1469. Composition is skewed to basic and acidic residues over residues Gly626–His649 and Thr671–Thr687. Phosphothreonine is present on Thr693. Residues Leu698 to Phe709 carry the LFa 8 motif. 3 stretches are compositionally biased toward polar residues: residues Phe709–Phe728, Tyr735–Pro745, and Pro938–Ser956. Composition is skewed to basic and acidic residues over residues Asp971–Leu990, Glu1031–Glu1042, and Arg1077–Pro1089. A compositionally biased stretch (polar residues) spans Ala1091 to Ser1109. Positions Asn1118–Arg1136 are enriched in basic residues. A compositionally biased stretch (basic and acidic residues) spans Asp1159 to Ser1170. 7 positions are modified to phosphoserine: Ser1241, Ser1245, Ser1254, Ser1344, Ser1380, Ser1381, and Ser1408. Composition is skewed to low complexity over residues Phe1417–Ala1426 and Ala1434–Thr1452.

The protein belongs to the FAM21 family. Component of the WASH complex.

In terms of biological role, acts at least in part as component of the WASH complex which may regulate wash nucleation-promoting factor (NPF) activity and is required for its membrane targeting during endosomal sorting. The protein is WASH complex subunit 2 of Drosophila melanogaster (Fruit fly).